A 281-amino-acid chain; its full sequence is Complement C1q tumor necrosis factor-related protein 1 (281 aa).

The first 25 residues, 1–25 (MGSCAQGFMLGCCLLLAITWGPILS), serve as a signal peptide directing secretion. Residues 35–68 (QEWEETEELPSPLDPVTRPEETREKYSPRQGEDL) form a disordered region. Basic and acidic residues predominate over residues 51–66 (TRPEETREKYSPRQGE). A glycan (N-linked (GlcNAc...) asparagine) is linked at Asn-93. Residues 99–140 (GEKGDRGDRGLQGKYGKIGSTGPRGHVGPKGQKGSIGAPGNH) form the Collagen-like domain. The disordered stretch occupies residues 107-136 (RGLQGKYGKIGSTGPRGHVGPKGQKGSIGA). Residues 141 to 281 (CKSQYAAFSV…GYLVKPASEP (141 aa)) enclose the C1q domain.

It is found in the secreted. The protein is Complement C1q tumor necrosis factor-related protein 1 (C1qtnf1) of Mus musculus (Mouse).